Reading from the N-terminus, the 302-residue chain is Acetylesterase (302 aa).

Residues 1–21 (MGRFLTTTALALLATGGAATA) form the signal peptide. N-linked (GlcNAc...) asparagine glycosylation is found at asparagine 84 and asparagine 101.

This sequence belongs to the carbohydrate esterase CE16 family.

The protein resides in the secreted. It carries out the reaction an acetyl ester + H2O = an aliphatic alcohol + acetate + H(+). Acetyl esterase that acts as an exo-deacetylase. Liberates acetic acid from xylo-oligomers. The polypeptide is Acetylesterase (Thermothelomyces thermophilus (Myceliophthora thermophila)).